We begin with the raw amino-acid sequence, 535 residues long: Sodium/hydrogen exchanger 1 (535 aa).

Residues 1-21 lie on the Cytoplasmic side of the membrane; sequence MGMEVAAARLGALYTTSDYAS. The chain crosses the membrane as a helical span at residues 22 to 42; the sequence is VVSINLFVALLCACIVLGHLL. The Vacuolar segment spans residues 43–46; it reads EENR. A helical transmembrane segment spans residues 47–67; it reads WVNESITALIIGLCTGVVILL. The Cytoplasmic segment spans residues 68-75; it reads MTKGKSSH. The helical transmembrane segment at 76–96 threads the bilayer; it reads LFVFSEDLFFIYLLPPIIFNA. Residues 97-114 are Vacuolar-facing; it reads GFQVKKKQFFRNFMTITL. Residues 115–135 form a helical membrane-spanning segment; sequence FGAVGTMISFFTISIAAIAIF. The Cytoplasmic portion of the chain corresponds to 136–137; it reads SR. A helical transmembrane segment spans residues 138-158; the sequence is MNIGTLDVGDFLAIGAIFSAT. The Vacuolar segment spans residues 159 to 173; it reads DSVCTLQVLNQDETP. Residues 174–194 form a helical membrane-spanning segment; it reads FLYSLVFGEGVVNDATSIVLF. Over 195–218 the chain is Cytoplasmic; it reads NALQNFDLVHIDAAVVLKFLGNFF. The chain crosses the membrane as a helical span at residues 219–239; it reads YLFLSSTFLGVFAGLLSAYII. Over 240–264 the chain is Vacuolar; that stretch reads KKLYIGRHSTDREVALMMLMAYLSY. A helical transmembrane segment spans residues 265–285; that stretch reads MLAELLDLSGILTVFFCGIVM. Topologically, residues 286-304 are cytoplasmic; it reads SHYTWHNVTESSRVTTKHA. A helical transmembrane segment spans residues 305–325; the sequence is FATLSFIAETFLFLYVGMDAL. Topologically, residues 326–344 are vacuolar; it reads DIEKWEFASDRPGKSIGIS. A helical membrane pass occupies residues 345 to 365; it reads SILLGLVLIGRAAFVFPLSFL. Residues 366–381 are Cytoplasmic-facing; the sequence is SNLTKKAPNEKITWRQ. A helical membrane pass occupies residues 382–402; the sequence is QVVIWWAGLMRGAVSIALAYN. Residues 403 to 415 are Vacuolar-facing; that stretch reads KFTRSGHTQLHGN. Residues 416–436 form a helical membrane-spanning segment; it reads AIMITSTITVVLFSTMVFGMM. Residues 437 to 535 lie on the Cytoplasmic side of the membrane; that stretch reads TKPLIRLLLP…SPTEQSHGGR (99 aa). The interval 452–478 is disordered; sequence VTSEPSSPKSLHSPLLTSMQGSDLEST. Residues 454–469 are compositionally biased toward low complexity; sequence SEPSSPKSLHSPLLTS.

It belongs to the monovalent cation:proton antiporter 1 (CPA1) transporter (TC 2.A.36) family.

It localises to the vacuole membrane. The enzyme catalyses Na(+)(in) + H(+)(out) = Na(+)(out) + H(+)(in). It catalyses the reaction K(+)(in) + H(+)(out) = K(+)(out) + H(+)(in). Vacuolar antiporter that acts in low affinity electroneutral exchange of protons H(+) for cations such as Na(+) or K(+) across membranes. Plays important roles in the transport of Na(+) and K(+) accumulated in the cytoplasm into vacuoles, and is involved in salt stress tolerance. This Oryza sativa subsp. japonica (Rice) protein is Sodium/hydrogen exchanger 1.